Consider the following 241-residue polypeptide: Ribonuclease PH (241 aa).

Phosphate contacts are provided by residues Arg89 and 127–129 (GTR).

The protein belongs to the RNase PH family. As to quaternary structure, homohexameric ring arranged as a trimer of dimers.

It carries out the reaction tRNA(n+1) + phosphate = tRNA(n) + a ribonucleoside 5'-diphosphate. Phosphorolytic 3'-5' exoribonuclease that plays an important role in tRNA 3'-end maturation. Removes nucleotide residues following the 3'-CCA terminus of tRNAs; can also add nucleotides to the ends of RNA molecules by using nucleoside diphosphates as substrates, but this may not be physiologically important. Probably plays a role in initiation of 16S rRNA degradation (leading to ribosome degradation) during starvation. In Xanthomonas axonopodis pv. citri (strain 306), this protein is Ribonuclease PH.